The primary structure comprises 261 residues: uncharacterized protein (261 aa).

This is an uncharacterized protein from Haemophilus influenzae (strain ATCC 51907 / DSM 11121 / KW20 / Rd).